A 331-amino-acid polypeptide reads, in one-letter code: Glyceraldehyde-3-phosphate dehydrogenase, cytosolic (331 aa).

Residues 11 to 12 (RI), Asp33, and Arg77 each bind NAD(+). Residues 148-150 (SCT), Thr179, 208-209 (TG), and Arg231 each bind D-glyceraldehyde 3-phosphate. Cys149 acts as the Nucleophile in catalysis. Position 313 (Asn313) interacts with NAD(+).

It belongs to the glyceraldehyde-3-phosphate dehydrogenase family. As to quaternary structure, homotetramer.

The protein resides in the cytoplasm. It catalyses the reaction D-glyceraldehyde 3-phosphate + phosphate + NAD(+) = (2R)-3-phospho-glyceroyl phosphate + NADH + H(+). Its pathway is carbohydrate degradation; glycolysis; pyruvate from D-glyceraldehyde 3-phosphate: step 1/5. This Leishmania mexicana protein is Glyceraldehyde-3-phosphate dehydrogenase, cytosolic (GAPC).